We begin with the raw amino-acid sequence, 1960 residues long: Myosin-9 (1960 aa).

Ala2 bears the N-acetylalanine mark. The tract at residues 2-838 (AQQAADKYLY…RLFTKVKPLL (837 aa)) is mediates interaction with LIMCH1. Lys8 is modified (N6-acetyllysine). Tyr11 carries the phosphotyrosine modification. One can recognise a Myosin N-terminal SH3-like domain in the interval 27–77 (AAKKLVWVPSDKSGFEPASLKEEVGEEAIVELVENGKKVKVNKDDIQKMNP). In terms of domain architecture, Myosin motor spans 81–776 (SKVEDMAELT…VLAHLEEERD (696 aa)). At Lys102 the chain carries N6-acetyllysine. 174–181 (GESGAGKT) lines the ATP pocket. N6-acetyllysine is present on residues Lys299, Lys435, and Lys613. Phosphoserine is present on Ser628. The interval 654-676 (LAKLMATLRNTNPNFVRCIIPNH) is actin-binding. Tyr754 carries the post-translational modification Phosphotyrosine. Residues 779-808 (ITDVIIGFQACCRGYLARKAFAKRQQQLTA) enclose the IQ domain. The stretch at 837–1926 (LLQVSRQEEE…LKNKLRRGDL (1090 aa)) forms a coiled coil. An N6-succinyllysine modification is found at Lys850. An N6-acetyllysine mark is found at Lys860, Lys975, and Lys1024. Position 1114 is a phosphoserine (Ser1114). The tract at residues 1117-1137 (QEDLESERASRNKAEKQKRDL) is disordered. Basic and acidic residues predominate over residues 1122-1137 (SERASRNKAEKQKRDL). N6-acetyllysine is present on residues Lys1234, Lys1249, Lys1357, Lys1392, Lys1404, Lys1410, Lys1459, and Lys1638. Lys1669 bears the N6-succinyllysine mark. Ser1714 is subject to Phosphoserine. N6-acetyllysine is present on residues Lys1793, Lys1802, and Lys1845. Positions 1877 to 1918 (RQLEEAEEEAQRANASRRKLQRELEDATETADAMNREVSSLK) are disordered. An Omega-N-methylarginine modification is found at Arg1923. The tract at residues 1934-1960 (VARKGAGDCSDEEVDGKADGAEAKAAE) is disordered. A Phosphoserine modification is found at Ser1943. Residues 1948–1960 (DGKADGAEAKAAE) show a composition bias toward basic and acidic residues.

It belongs to the TRAFAC class myosin-kinesin ATPase superfamily. Myosin family. As to quaternary structure, myosin is a hexameric protein that consists of 2 heavy chain subunits (MHC), 2 alkali light chain subunits (MLC) and 2 regulatory light chain subunits (MLC-2). Interacts with RASIP1. Interacts with DDR1. Interacts with PDLIM2. Interacts with SVIL. Interacts with HTRA3. Interacts with Myo7a. Interacts with CFAP95. Interacts with LIMCH1; independently of the integration of MYH9 into the myosin complex. Interacts with RAB3A. Interacts with ZBED4. Interacts with S100A4; this interaction increases cell motility. ISGylated. In terms of processing, ubiquitination.

It localises to the cytoplasm. The protein resides in the cytoskeleton. It is found in the cell cortex. The protein localises to the cytoplasmic vesicle. Its subcellular location is the secretory vesicle. It localises to the cortical granule. Functionally, cellular myosin that appears to play a role in cytokinesis, cell shape, and specialized functions such as secretion and capping. Required for cortical actin clearance prior to oocyte exocytosis. Promotes cell motility in conjunction with S100A4. During cell spreading, plays an important role in cytoskeleton reorganization, focal contact formation (in the margins but not the central part of spreading cells), and lamellipodial retraction; this function is mechanically antagonized by MYH10. The protein is Myosin-9 (MYH9) of Canis lupus familiaris (Dog).